The following is a 374-amino-acid chain: Flagellar P-ring protein (374 aa).

The N-terminal stretch at 1-29 (MSGLGFTGVVRIAVMALLALAFLGAPAHA) is a signal peptide. Polar residues predominate over residues 296 to 311 (ESPQVSQPNPLSNGRT). The interval 296-316 (ESPQVSQPNPLSNGRTVMTPR) is disordered.

This sequence belongs to the FlgI family. The basal body constitutes a major portion of the flagellar organelle and consists of four rings (L,P,S, and M) mounted on a central rod.

It is found in the periplasm. Its subcellular location is the bacterial flagellum basal body. Assembles around the rod to form the L-ring and probably protects the motor/basal body from shearing forces during rotation. The sequence is that of Flagellar P-ring protein from Nitrobacter winogradskyi (strain ATCC 25391 / DSM 10237 / CIP 104748 / NCIMB 11846 / Nb-255).